Reading from the N-terminus, the 509-residue chain is Methionine--tRNA ligase (509 aa).

Positions 12–22 (YYPSGDLHLGH) match the 'HIGH' region motif. The 'KMSKS' region motif lies at 302 to 306 (KMSKS). Residue Lys-305 participates in ATP binding.

This sequence belongs to the class-I aminoacyl-tRNA synthetase family. MetG type 2B subfamily. Monomer.

It is found in the cytoplasm. It carries out the reaction tRNA(Met) + L-methionine + ATP = L-methionyl-tRNA(Met) + AMP + diphosphate. Is required not only for elongation of protein synthesis but also for the initiation of all mRNA translation through initiator tRNA(fMet) aminoacylation. This is Methionine--tRNA ligase (metG) from Mycoplasmopsis pulmonis (strain UAB CTIP) (Mycoplasma pulmonis).